Reading from the N-terminus, the 371-residue chain is UDP-N-acetylglucosamine--N-acetylmuramyl-(pentapeptide) pyrophosphoryl-undecaprenol N-acetylglucosamine transferase (371 aa).

UDP-N-acetyl-alpha-D-glucosamine-binding positions include 15–17, Asn-126, Arg-169, Ser-197, and Gln-298; that span reads TGG.

It belongs to the glycosyltransferase 28 family. MurG subfamily.

The protein localises to the cell inner membrane. The enzyme catalyses di-trans,octa-cis-undecaprenyl diphospho-N-acetyl-alpha-D-muramoyl-L-alanyl-D-glutamyl-meso-2,6-diaminopimeloyl-D-alanyl-D-alanine + UDP-N-acetyl-alpha-D-glucosamine = di-trans,octa-cis-undecaprenyl diphospho-[N-acetyl-alpha-D-glucosaminyl-(1-&gt;4)]-N-acetyl-alpha-D-muramoyl-L-alanyl-D-glutamyl-meso-2,6-diaminopimeloyl-D-alanyl-D-alanine + UDP + H(+). The protein operates within cell wall biogenesis; peptidoglycan biosynthesis. Its function is as follows. Cell wall formation. Catalyzes the transfer of a GlcNAc subunit on undecaprenyl-pyrophosphoryl-MurNAc-pentapeptide (lipid intermediate I) to form undecaprenyl-pyrophosphoryl-MurNAc-(pentapeptide)GlcNAc (lipid intermediate II). This chain is UDP-N-acetylglucosamine--N-acetylmuramyl-(pentapeptide) pyrophosphoryl-undecaprenol N-acetylglucosamine transferase, found in Paramagnetospirillum magneticum (strain ATCC 700264 / AMB-1) (Magnetospirillum magneticum).